A 94-amino-acid polypeptide reads, in one-letter code: Small ribosomal subunit protein bS6 (94 aa).

It belongs to the bacterial ribosomal protein bS6 family.

Functionally, binds together with bS18 to 16S ribosomal RNA. The sequence is that of Small ribosomal subunit protein bS6 from Clostridium botulinum (strain Hall / ATCC 3502 / NCTC 13319 / Type A).